The chain runs to 420 residues: Dual-specificity RNA methyltransferase RlmN (420 aa).

Glu-115 serves as the catalytic Proton acceptor. The region spanning 121–388 (DADRGTLCVS…APIRTPRGRD (268 aa)) is the Radical SAM core domain. An intrachain disulfide couples Cys-128 to Cys-393. Residues Cys-135, Cys-139, and Cys-142 each coordinate [4Fe-4S] cluster. S-adenosyl-L-methionine contacts are provided by residues 217–218 (GE), Ser-249, 271–273 (SLH), and Asn-350. Cys-393 serves as the catalytic S-methylcysteine intermediate.

This sequence belongs to the radical SAM superfamily. RlmN family. Requires [4Fe-4S] cluster as cofactor.

Its subcellular location is the cytoplasm. The enzyme catalyses adenosine(2503) in 23S rRNA + 2 reduced [2Fe-2S]-[ferredoxin] + 2 S-adenosyl-L-methionine = 2-methyladenosine(2503) in 23S rRNA + 5'-deoxyadenosine + L-methionine + 2 oxidized [2Fe-2S]-[ferredoxin] + S-adenosyl-L-homocysteine. The catalysed reaction is adenosine(37) in tRNA + 2 reduced [2Fe-2S]-[ferredoxin] + 2 S-adenosyl-L-methionine = 2-methyladenosine(37) in tRNA + 5'-deoxyadenosine + L-methionine + 2 oxidized [2Fe-2S]-[ferredoxin] + S-adenosyl-L-homocysteine. Functionally, specifically methylates position 2 of adenine 2503 in 23S rRNA and position 2 of adenine 37 in tRNAs. m2A2503 modification seems to play a crucial role in the proofreading step occurring at the peptidyl transferase center and thus would serve to optimize ribosomal fidelity. In Sphingopyxis alaskensis (strain DSM 13593 / LMG 18877 / RB2256) (Sphingomonas alaskensis), this protein is Dual-specificity RNA methyltransferase RlmN.